The primary structure comprises 96 residues: UPF0235 protein ECA3630 (96 aa).

Belongs to the UPF0235 family.

The polypeptide is UPF0235 protein ECA3630 (Pectobacterium atrosepticum (strain SCRI 1043 / ATCC BAA-672) (Erwinia carotovora subsp. atroseptica)).